We begin with the raw amino-acid sequence, 518 residues long: ATP synthase subunit alpha (518 aa).

Residue Gly-169 to Thr-176 participates in ATP binding.

It belongs to the ATPase alpha/beta chains family. As to quaternary structure, F-type ATPases have 2 components, CF(1) - the catalytic core - and CF(0) - the membrane proton channel. CF(1) has five subunits: alpha(3), beta(3), gamma(1), delta(1), epsilon(1). CF(0) has three main subunits: a(1), b(2) and c(9-12). The alpha and beta chains form an alternating ring which encloses part of the gamma chain. CF(1) is attached to CF(0) by a central stalk formed by the gamma and epsilon chains, while a peripheral stalk is formed by the delta and b chains.

The protein localises to the cell membrane. It catalyses the reaction ATP + H2O + 4 H(+)(in) = ADP + phosphate + 5 H(+)(out). Its function is as follows. Produces ATP from ADP in the presence of a proton gradient across the membrane. The alpha chain is a regulatory subunit. The chain is ATP synthase subunit alpha from Mycoplasma pneumoniae (strain ATCC 29342 / M129 / Subtype 1) (Mycoplasmoides pneumoniae).